We begin with the raw amino-acid sequence, 246 residues long: mRNA-decapping protein g5R (246 aa).

Positions 93–239 constitute a Nudix hydrolase domain; that stretch reads QKFRKNWLLP…IIGPAFNFIK (147 aa). The Nudix box motif lies at 128–149; sequence GKPKEDESDLTCAIREFEEETG. Glutamate 134 serves as a coordination point for Mg(2+). Glutamate 143 serves as the catalytic Nucleophile. Mg(2+) contacts are provided by glutamate 147 and aspartate 169.

The protein belongs to the Nudix hydrolase family. DIPP subfamily. Interacts with host RPL23A. Requires Mg(2+) as cofactor. Mn(2+) serves as cofactor.

It localises to the host rough endoplasmic reticulum. It carries out the reaction diphospho-myo-inositol polyphosphate + H2O = myo-inositol polyphosphate + phosphate.. Decapping enzyme required for the removal of the 5'-end m7GpppN cap tethered to viral and host mRNAs to allow their decay in cells. May therefore accelerate viral and cellular mRNA turnover to eliminate competing host mRNAs and allow stage-specific synthesis of viral proteins. Acceleration of the turnover of cellular transcripts may even promote the shutoff of host protein synthesis. In addition to the mRNA cap, g5R also efficiently hydrolyzes diphosphoinositol polyphosphates. Down-regulation of the level of PP-InsP5 (diphosphoinositol pentakisphosphate) may play a role in viral manipulation of the cellular secretory pathway, a step necessary for the formation of virions. Binds viral and cellular poly(A) mRNAs, thereby decreasing both types of mRNAs. This African swine fever virus (isolate Warthog/Namibia/Wart80/1980) (ASFV) protein is mRNA-decapping protein g5R.